A 491-amino-acid chain; its full sequence is Aspartyl/glutamyl-tRNA(Asn/Gln) amidotransferase subunit B (491 aa).

Belongs to the GatB/GatE family. GatB subfamily. In terms of assembly, heterotrimer of A, B and C subunits.

It carries out the reaction L-glutamyl-tRNA(Gln) + L-glutamine + ATP + H2O = L-glutaminyl-tRNA(Gln) + L-glutamate + ADP + phosphate + H(+). It catalyses the reaction L-aspartyl-tRNA(Asn) + L-glutamine + ATP + H2O = L-asparaginyl-tRNA(Asn) + L-glutamate + ADP + phosphate + 2 H(+). Functionally, allows the formation of correctly charged Asn-tRNA(Asn) or Gln-tRNA(Gln) through the transamidation of misacylated Asp-tRNA(Asn) or Glu-tRNA(Gln) in organisms which lack either or both of asparaginyl-tRNA or glutaminyl-tRNA synthetases. The reaction takes place in the presence of glutamine and ATP through an activated phospho-Asp-tRNA(Asn) or phospho-Glu-tRNA(Gln). This Parasynechococcus marenigrum (strain WH8102) protein is Aspartyl/glutamyl-tRNA(Asn/Gln) amidotransferase subunit B.